The following is a 444-amino-acid chain: Cell division cycle 20.4, cofactor of APC complex (444 aa).

Residues 88-99 (LLSTNHSDSPHQ) show a composition bias toward polar residues. A disordered region spans residues 88–108 (LLSTNHSDSPHQNPKPVKPRR). 7 WD repeats span residues 124–161 (RDDF…TSEL), 166–205 (EDKG…QVRT), 209–246 (GHES…SIVE), 250–289 (GHTE…SKQT), 298–340 (EHTA…CLNS), 342–383 (ETGS…KMAE), and 386–425 (GHTS…PKTT).

This sequence belongs to the WD repeat CDC20/Fizzy family. In terms of assembly, the APC/C is composed of at least 11 subunits that stay tightly associated throughout the cell cycle.

It localises to the cytoplasm. It functions in the pathway protein modification; protein ubiquitination. Component of the anaphase promoting complex/cyclosome (APC/C), a cell cycle-regulated E3 ubiquitin-protein ligase complex that controls progression through mitosis and the G1 phase of the cell cycle. This Arabidopsis thaliana (Mouse-ear cress) protein is Cell division cycle 20.4, cofactor of APC complex (CDC20-4).